We begin with the raw amino-acid sequence, 129 residues long: Acetophenone carboxylase beta subunit (129 aa).

Acetophenone carboxylase consists of five subunits; a heterooctameric subcomplex of two alpha (Apc1), two beta (Apc2), two gamma (Apc3) and two delta (Apc4) subunits assembles with the epsilon (Apc5) subunit in an unknown stoichiometry. Mg(2+) is required as a cofactor. Mn(2+) serves as cofactor.

The protein localises to the cytoplasm. The enzyme catalyses acetophenone + hydrogencarbonate + 2 ATP + H2O = 3-oxo-3-phenylpropanoate + 2 ADP + 2 phosphate + 2 H(+). Its activity is regulated as follows. Inhibited by zinc ions, carbamoylphosphate and beta,gamma-imido-ATP. In terms of biological role, catalyzes the carboxylation of acetophenone to form 3-oxo-3-phenylpropanoate (benzoylacetate) in the anaerobic catabolism of ethylbenzene. Also carboxylates propiophenone at the same rate and 4-acetyl-pyridine at lower rates. This Aromatoleum aromaticum (strain DSM 19018 / LMG 30748 / EbN1) (Azoarcus sp. (strain EbN1)) protein is Acetophenone carboxylase beta subunit (apc2).